Reading from the N-terminus, the 146-residue chain is Large ribosomal subunit protein uL15 (146 aa).

The tract at residues 1 to 52 is disordered; that stretch reads MKLSNLSPKAGSKKRRRRVGRGIAAGQGASCGFGMRGQKSRSGTGTKAGFEG. The span at 11 to 20 shows a compositional bias: basic residues; it reads GSKKRRRRVG. Residues 23–35 are compositionally biased toward gly residues; that stretch reads IAAGQGASCGFGM.

It belongs to the universal ribosomal protein uL15 family. In terms of assembly, part of the 50S ribosomal subunit.

In terms of biological role, binds to the 23S rRNA. The protein is Large ribosomal subunit protein uL15 of Picosynechococcus sp. (strain ATCC 27264 / PCC 7002 / PR-6) (Agmenellum quadruplicatum).